The sequence spans 196 residues: Nodulation protein A (196 aa).

The protein belongs to the NodA family.

The protein resides in the cytoplasm. Its function is as follows. N-acyltransferase required for nodulation. Acts in the production of a small, heat-stable compound (Nod) that stimulates mitosis in various plant protoplasts. The polypeptide is Nodulation protein A (Mesorhizobium sp. (strain 7653R)).